Consider the following 485-residue polypeptide: Benzaldehyde dehydrogenase YfmT (485 aa).

Residue 231–236 (GSTKVG) coordinates NAD(+). Residues glutamate 253 and cysteine 287 contribute to the active site.

It belongs to the aldehyde dehydrogenase family.

It carries out the reaction benzaldehyde + NAD(+) + H2O = benzoate + NADH + 2 H(+). The catalysed reaction is vanillin + NAD(+) + H2O = vanillate + NADH + 2 H(+). A benzaldehyde dehydrogenase able to act on substrates with 3- and 4-hydroxy and methoxy substitutions; converts vanillin (4-hydroxy-3-methoxybenzaldehyde) to vanillic acid in vitro. The physiological substrate is unknown. The protein is Benzaldehyde dehydrogenase YfmT (yfmT) of Bacillus subtilis (strain 168).